The chain runs to 201 residues: Small ribosomal subunit protein uS4c (201 aa).

The region spanning 89 to 150 (MRLDNILFRL…KERSKALIQN (62 aa)) is the S4 RNA-binding domain.

The protein belongs to the universal ribosomal protein uS4 family. In terms of assembly, part of the 30S ribosomal subunit. Contacts protein S5. The interaction surface between S4 and S5 is involved in control of translational fidelity.

It localises to the plastid. Its subcellular location is the chloroplast. In terms of biological role, one of the primary rRNA binding proteins, it binds directly to 16S rRNA where it nucleates assembly of the body of the 30S subunit. Its function is as follows. With S5 and S12 plays an important role in translational accuracy. This chain is Small ribosomal subunit protein uS4c (rps4), found in Phalaenopsis aphrodite subsp. formosana (Moth orchid).